We begin with the raw amino-acid sequence, 154 residues long: Ubiquitin-like protein 4A-A (154 aa).

A Ubiquitin-like domain is found at 1 to 76 (MILTVKPLQG…LNLVVRPAGE (76 aa)).

Component of the BAT3 complex.

The protein resides in the cytoplasm. It localises to the cytosol. Functionally, component of the BAT3 complex, a multiprotein complex involved in the post-translational delivery of tail-anchored (TA) membrane proteins to the endoplasmic reticulum membrane. TA membrane proteins, also named type II transmembrane proteins, contain a single C-terminal transmembrane region. This is Ubiquitin-like protein 4A-A (ubl4aa) from Salmo salar (Atlantic salmon).